We begin with the raw amino-acid sequence, 579 residues long: Pre-mRNA-processing factor 17 (579 aa).

A compositionally biased stretch (low complexity) spans Met1–Glu19. 2 disordered regions span residues Met1–Ala34 and Asp204–Glu237. WD repeat units lie at residues Gly286–Arg326, Gly330–Arg369, Thr371–Glu413, Arg416–Tyr455, Pro459–Lys498, Gly504–Arg545, and Ala548–Trp578.

Component of the catalytic spliceosome C complexes. Component of the postcatalytic spliceosome P complex. Interacts with PPIL1; this interaction leads to CDC40 isomerization. Post-translationally, undergoes isomerization of the peptide bond between Gly-94 and Pro-95. The reaction is catalyzed by PPIL1.

The protein resides in the nucleus. The protein localises to the nucleus speckle. In terms of biological role, required for pre-mRNA splicing as component of the activated spliceosome. Plays an important role in embryonic brain development; this function does not require proline peptide bond isomerization. This chain is Pre-mRNA-processing factor 17 (Cdc40), found in Mus musculus (Mouse).